The sequence spans 343 residues: MDQVGRKVVVALDTMGGDRAPDEILLGASVYLRQNPSSVFFRLFGNSSSIERCLSSKANVHLLESCEIIHAGDVVMSDDKLSSAVRKKGSSMYKAVQDVREKASQCVVSAGNTGAFMGISKILLGMLENIYRPAIVTTLPTKKGEVVVLDLGANLDCSSDVLYQFAFMGSAFAKAALGVKNPRVALLNVGVEENKGTDAVKEAFHLLNERTDEDFTFIGYAEPSDVLGGEVDVVVSDGFTGNVMLKTAESIFRLLRDDIVGATRTSLLSRLAGLVLAKSLKKSISRFNPDLRNGAMLIGVNGVAVKAHGGSDSVAFANAIGAAVKLVANNLNSKIIDSICTID.

It belongs to the PlsX family. Homodimer. Probably interacts with PlsY.

The protein localises to the cytoplasm. It catalyses the reaction a fatty acyl-[ACP] + phosphate = an acyl phosphate + holo-[ACP]. The protein operates within lipid metabolism; phospholipid metabolism. In terms of biological role, catalyzes the reversible formation of acyl-phosphate (acyl-PO(4)) from acyl-[acyl-carrier-protein] (acyl-ACP). This enzyme utilizes acyl-ACP as fatty acyl donor, but not acyl-CoA. The protein is Phosphate acyltransferase of Neorickettsia sennetsu (strain ATCC VR-367 / Miyayama) (Ehrlichia sennetsu).